Reading from the N-terminus, the 240-residue chain is BLOC-1-related complex subunit 8 homolog (240 aa).

Disordered regions lie at residues methionine 1 to glycine 33 and lysine 163 to asparagine 240. Composition is skewed to low complexity over residues serine 7–serine 26 and lysine 163–glutamine 179. Positions threonine 180–serine 190 are enriched in polar residues. The segment covering aspartate 196–asparagine 205 has biased composition (low complexity). The segment covering glutamate 208–asparagine 240 has biased composition (basic and acidic residues). The stretch at glutamate 211 to isoleucine 239 forms a coiled coil.

Belongs to the BORCS8 family.

The protein localises to the lysosome membrane. Functionally, may participate in the coupling of lysosomes to microtubule plus-end-directed kinesin motor. This Dictyostelium discoideum (Social amoeba) protein is BLOC-1-related complex subunit 8 homolog.